We begin with the raw amino-acid sequence, 389 residues long: Dihydroorotase (389 aa).

His51 and His53 together coordinate Zn(2+). Substrate contacts are provided by residues His53–Arg55 and Asn85. Zn(2+)-binding residues include Lys133, His158, His193, and Asp256. Lys133 carries the post-translational modification N6-carboxylysine. Residue Asp256 is part of the active site. Residues His260 and Pro274 to Gly275 contribute to the substrate site.

The protein belongs to the metallo-dependent hydrolases superfamily. DHOase family. Class I DHOase subfamily. Zn(2+) is required as a cofactor.

It catalyses the reaction (S)-dihydroorotate + H2O = N-carbamoyl-L-aspartate + H(+). It participates in pyrimidine metabolism; UMP biosynthesis via de novo pathway; (S)-dihydroorotate from bicarbonate: step 3/3. In terms of biological role, catalyzes the reversible cyclization of carbamoyl aspartate to dihydroorotate. This is Dihydroorotase from Sulfolobus acidocaldarius (strain ATCC 33909 / DSM 639 / JCM 8929 / NBRC 15157 / NCIMB 11770).